The chain runs to 199 residues: 7-methyl-GTP pyrophosphatase (199 aa).

The active-site Proton acceptor is Asp-76.

Belongs to the Maf family. YceF subfamily. The cofactor is a divalent metal cation.

Its subcellular location is the cytoplasm. The catalysed reaction is N(7)-methyl-GTP + H2O = N(7)-methyl-GMP + diphosphate + H(+). Functionally, nucleoside triphosphate pyrophosphatase that hydrolyzes 7-methyl-GTP (m(7)GTP). May have a dual role in cell division arrest and in preventing the incorporation of modified nucleotides into cellular nucleic acids. The protein is 7-methyl-GTP pyrophosphatase of Rhizobium etli (strain ATCC 51251 / DSM 11541 / JCM 21823 / NBRC 15573 / CFN 42).